Reading from the N-terminus, the 142-residue chain is Crustacean hyperglycemic hormones (142 aa).

Residues 1 to 26 (MYSKTIPAMLAIITVAYLCALPHAHA) form the signal peptide. Gln-67 carries the post-translational modification Pyrrolidone carboxylic acid; partial. 3 disulfides stabilise this stretch: Cys-73–Cys-109, Cys-89–Cys-105, and Cys-92–Cys-118. Position 138 is a valine amide (Val-138).

Belongs to the arthropod CHH/MIH/GIH/VIH hormone family. In terms of processing, the N-terminus is blocked only in isoform CHH-II but not in isoform CHH-I. As to expression, produced by the medulla terminalis X-organ in the eyestalks and transported to the sinus gland where they are stored and released.

It is found in the secreted. Functionally, hormone found in the sinus gland of isopods and decapods which controls the blood sugar level. Has a secretagogue action over the amylase released from the midgut gland. May act as a stress hormone and may be involved in the control of molting and reproduction. The protein is Crustacean hyperglycemic hormones of Carcinus maenas (Common shore crab).